The primary structure comprises 373 residues: Spore germination protein KB (373 aa).

Transmembrane regions (helical) follow at residues 11–31 (LFVM…PGSM), 37–57 (WIAV…YQGI), 78–98 (LSWL…ARVL), 105–125 (LLTF…LMVV), 143–163 (LLFG…IVSG), 185–205 (VFTQ…MIFP), 219–239 (IAMA…ISVL), 269–289 (VFFM…YLYA), 306–326 (LAYP…TNFS), and 338–358 (LYIH…VAVW).

This sequence belongs to the amino acid-polyamine-organocation (APC) superfamily. Spore germination protein (SGP) (TC 2.A.3.9) family.

The protein localises to the cell membrane. Involved in the germination response to the combination of glucose, fructose, L-asparagine, and KCl. The protein is Spore germination protein KB (gerKB) of Bacillus subtilis (strain 168).